A 515-amino-acid chain; its full sequence is Endoglucanase 23 (515 aa).

The first 29 residues, 1 to 29, serve as a signal peptide directing secretion; it reads MALLSAPVRRRRSRVRVLLVCCCLLLALA. Asp-95 acts as the Nucleophile in catalysis. N-linked (GlcNAc...) asparagine glycosylation is found at Asn-178, Asn-375, and Asn-384. The active site involves His-426. A glycan (N-linked (GlcNAc...) asparagine) is linked at Asn-452. Active-site residues include Asp-477 and Glu-486.

It belongs to the glycosyl hydrolase 9 (cellulase E) family.

The protein resides in the secreted. It catalyses the reaction Endohydrolysis of (1-&gt;4)-beta-D-glucosidic linkages in cellulose, lichenin and cereal beta-D-glucans.. The chain is Endoglucanase 23 (GLU12) from Oryza sativa subsp. japonica (Rice).